A 115-amino-acid polypeptide reads, in one-letter code: Replication initiation control protein YabA (115 aa).

Zn(2+)-binding residues include His-90, Cys-92, Cys-106, and Cys-109.

This sequence belongs to the YabA family. As to quaternary structure, homotetramer. Interacts with both DnaA and DnaN, acting as a bridge between these two proteins. Requires Zn(2+) as cofactor.

Its subcellular location is the cytoplasm. It is found in the nucleoid. Involved in control of chromosome replication initiation. Inhibits the cooperative binding of DnaA to the oriC region, thus negatively regulating initiation of chromosome replication. Inhibits the ability of DnaA-ATP to form a helix on DNA; does not disassemble preformed DnaA-DNA helices. Decreases the residence time of DnaA on the chromosome at its binding sites (oriC, replication forks and promoter-binding sites). Tethers DnaA to the replication machinery via the DNA polymerase beta sliding clamp subunit (dnaN). Associates with oriC and other DnaA targets on the chromosome in a DnaA-dependent manner. This chain is Replication initiation control protein YabA, found in Staphylococcus epidermidis (strain ATCC 35984 / DSM 28319 / BCRC 17069 / CCUG 31568 / BM 3577 / RP62A).